The primary structure comprises 1029 residues: Ig-like and fibronectin type-III domain-containing protein 1 (1029 aa).

A signal peptide spans 1-22 (MCNVAEDPSSFSTITIATTCRA). At 23 to 918 (EWPKVSPCIA…RRSASKGSSS (896 aa)) the chain is on the extracellular side. N-linked (GlcNAc...) asparagine glycosylation is found at N36, N93, N120, and N165. The 92-residue stretch at 90 to 181 (APGNVTISEL…TAKLFSTLPT (92 aa)) folds into the Fibronectin type-III 1 domain. Residues 185–227 (PLCTIGEPIYMNDGRVMICDAVNPCPNGFRCTGAGSDLSYCCP) enclose the WR1 domain. Residues N257, N374, N409, N442, N482, N507, and N552 are each glycosylated (N-linked (GlcNAc...) asparagine). 2 Fibronectin type-III domains span residues 330–417 (AVRN…TKPA) and 427–523 (APEK…AQKD). Residues 619–710 (ASVTMKKDKI…SRVEASSEVI (92 aa)) form the Ig-like C2-type domain. Residues C640 and C693 are joined by a disulfide bond. N-linked (GlcNAc...) asparagine glycosylation is present at N753. In terms of domain architecture, Fibronectin type-III 4 spans 817-909 (APSEVSNVRI…SAIPKDSEPR (93 aa)). Residues 919-939 (AFWIVVILVVFGVLIAGLAVL) traverse the membrane as a helical segment. At 940 to 1029 (SKRRELPYPI…NGMRYAKLET (90 aa)) the chain is on the cytoplasmic side. Residues 988 to 1021 (SATTGTAAATQSEWQSANLEANSTTDNSHEYRNG) are disordered. Residues 998–1013 (QSEWQSANLEANSTTD) show a composition bias toward polar residues.

It localises to the cell membrane. The polypeptide is Ig-like and fibronectin type-III domain-containing protein 1 (Caenorhabditis elegans).